We begin with the raw amino-acid sequence, 322 residues long: Ferredoxin--NADP reductase (322 aa).

The FAD site is built by Leu87, Phe119, Asp279, and Thr320.

The protein belongs to the ferredoxin--NADP reductase type 2 family. Homodimer. FAD is required as a cofactor.

The catalysed reaction is 2 reduced [2Fe-2S]-[ferredoxin] + NADP(+) + H(+) = 2 oxidized [2Fe-2S]-[ferredoxin] + NADPH. The chain is Ferredoxin--NADP reductase from Streptococcus suis (strain 98HAH33).